The following is a 456-amino-acid chain: UDP-glycosyltransferase 74D1 (456 aa).

UDP-alpha-D-glucose-binding positions include Ser279, 332 to 334 (SPQ), 349 to 357 (HCGWNSTLE), and 371 to 374 (YSDQ).

The protein belongs to the UDP-glycosyltransferase family. Expressed in leaves.

Glucosyltransferase that glucosylates jasmonate (JA) and JA derivatives. Also active on indole-3-acetic acid (IAA), 4-coumrate, cinnamate and caffeate. The chain is UDP-glycosyltransferase 74D1 (UGT74D1) from Arabidopsis thaliana (Mouse-ear cress).